Reading from the N-terminus, the 214-residue chain is Octanoyltransferase (214 aa).

The region spanning 34 to 214 (GLQKELVWLL…KFNEIFSSFN (181 aa)) is the BPL/LPL catalytic domain. Substrate is bound by residues 73 to 80 (RGGKYTYH), 145 to 147 (AFG), and 158 to 160 (GVS). Residue cysteine 176 is the Acyl-thioester intermediate of the active site.

Belongs to the LipB family.

It localises to the cytoplasm. The catalysed reaction is octanoyl-[ACP] + L-lysyl-[protein] = N(6)-octanoyl-L-lysyl-[protein] + holo-[ACP] + H(+). It participates in protein modification; protein lipoylation via endogenous pathway; protein N(6)-(lipoyl)lysine from octanoyl-[acyl-carrier-protein]: step 1/2. In terms of biological role, catalyzes the transfer of endogenously produced octanoic acid from octanoyl-acyl-carrier-protein onto the lipoyl domains of lipoate-dependent enzymes. Lipoyl-ACP can also act as a substrate although octanoyl-ACP is likely to be the physiological substrate. This Ehrlichia canis (strain Jake) protein is Octanoyltransferase.